We begin with the raw amino-acid sequence, 316 residues long: MLP-like protein 34 (316 aa).

The protein belongs to the MLP family.

The polypeptide is MLP-like protein 34 (MLP34) (Arabidopsis thaliana (Mouse-ear cress)).